The sequence spans 478 residues: Protein MAINTENANCE OF MERISTEMS (478 aa).

Positions 459–478 (ASTTNKRKRREEQQQTDWSE) are disordered. Residues 464–468 (KRKRR) carry the Nuclear localization signal motif.

Expressed in root meristem, root vasculature, shoot apical meristem (SAM), leaf vasculature and ovules.

It localises to the nucleus. Functionally, required for the organization of the root apical meristem (RAM) and the shoot apical meristem (SAM). Required to maintain genome stability and cell division activity in meristematic cells. In Arabidopsis thaliana (Mouse-ear cress), this protein is Protein MAINTENANCE OF MERISTEMS.